A 349-amino-acid chain; its full sequence is 4-hydroxy-3-methylbut-2-en-1-yl diphosphate synthase (flavodoxin) (349 aa).

Residues Cys264, Cys267, Cys299, and Glu306 each coordinate [4Fe-4S] cluster.

The protein belongs to the IspG family. Requires [4Fe-4S] cluster as cofactor.

The enzyme catalyses (2E)-4-hydroxy-3-methylbut-2-enyl diphosphate + oxidized [flavodoxin] + H2O + 2 H(+) = 2-C-methyl-D-erythritol 2,4-cyclic diphosphate + reduced [flavodoxin]. The protein operates within isoprenoid biosynthesis; isopentenyl diphosphate biosynthesis via DXP pathway; isopentenyl diphosphate from 1-deoxy-D-xylulose 5-phosphate: step 5/6. In terms of biological role, converts 2C-methyl-D-erythritol 2,4-cyclodiphosphate (ME-2,4cPP) into 1-hydroxy-2-methyl-2-(E)-butenyl 4-diphosphate. The chain is 4-hydroxy-3-methylbut-2-en-1-yl diphosphate synthase (flavodoxin) from Clostridium acetobutylicum (strain ATCC 824 / DSM 792 / JCM 1419 / IAM 19013 / LMG 5710 / NBRC 13948 / NRRL B-527 / VKM B-1787 / 2291 / W).